Here is a 443-residue protein sequence, read N- to C-terminus: Glutamate-1-semialdehyde 2,1-aminomutase (443 aa).

K277 carries the post-translational modification N6-(pyridoxal phosphate)lysine.

This sequence belongs to the class-III pyridoxal-phosphate-dependent aminotransferase family. HemL subfamily. As to quaternary structure, homodimer. The cofactor is pyridoxal 5'-phosphate.

The protein localises to the cytoplasm. It carries out the reaction (S)-4-amino-5-oxopentanoate = 5-aminolevulinate. It functions in the pathway porphyrin-containing compound metabolism; protoporphyrin-IX biosynthesis; 5-aminolevulinate from L-glutamyl-tRNA(Glu): step 2/2. The protein is Glutamate-1-semialdehyde 2,1-aminomutase of Pseudarthrobacter chlorophenolicus (strain ATCC 700700 / DSM 12829 / CIP 107037 / JCM 12360 / KCTC 9906 / NCIMB 13794 / A6) (Arthrobacter chlorophenolicus).